We begin with the raw amino-acid sequence, 180 residues long: Large ribosomal subunit protein uL18m (180 aa).

The protein belongs to the universal ribosomal protein uL18 family. As to quaternary structure, component of the mitochondrial large ribosomal subunit (mt-LSU). Mature mammalian 55S mitochondrial ribosomes consist of a small (28S) and a large (39S) subunit. The 28S small subunit contains a 12S ribosomal RNA (12S mt-rRNA) and 30 different proteins. The 39S large subunit contains a 16S rRNA (16S mt-rRNA), a copy of mitochondrial valine transfer RNA (mt-tRNA(Val)), which plays an integral structural role, and 52 different proteins.

Its subcellular location is the mitochondrion. Its function is as follows. Together with thiosulfate sulfurtransferase (TST), acts as a mitochondrial import factor for the cytosolic 5S rRNA. The precursor form shows RNA chaperone activity; is able to fold the 5S rRNA into an import-competent conformation that is recognized by rhodanese (TST). Both the cytoplasmic and mitochondrial forms are able to bind to the helix IV-loop D in the gamma domain of the 5S rRNA. The protein is Large ribosomal subunit protein uL18m (MRPL18) of Homo sapiens (Human).